Consider the following 557-residue polypeptide: Dihydroxy-acid dehydratase (557 aa).

D78 contacts Mg(2+). Residue C119 participates in [2Fe-2S] cluster binding. The Mg(2+) site is built by D120 and K121. Position 121 is an N6-carboxylysine (K121). C192 lines the [2Fe-2S] cluster pocket. E442 contributes to the Mg(2+) binding site. The active-site Proton acceptor is S468.

This sequence belongs to the IlvD/Edd family. Homodimer. It depends on [2Fe-2S] cluster as a cofactor. Mg(2+) is required as a cofactor.

The catalysed reaction is (2R)-2,3-dihydroxy-3-methylbutanoate = 3-methyl-2-oxobutanoate + H2O. It carries out the reaction (2R,3R)-2,3-dihydroxy-3-methylpentanoate = (S)-3-methyl-2-oxopentanoate + H2O. Its pathway is amino-acid biosynthesis; L-isoleucine biosynthesis; L-isoleucine from 2-oxobutanoate: step 3/4. It functions in the pathway amino-acid biosynthesis; L-valine biosynthesis; L-valine from pyruvate: step 3/4. In terms of biological role, functions in the biosynthesis of branched-chain amino acids. Catalyzes the dehydration of (2R,3R)-2,3-dihydroxy-3-methylpentanoate (2,3-dihydroxy-3-methylvalerate) into 2-oxo-3-methylpentanoate (2-oxo-3-methylvalerate) and of (2R)-2,3-dihydroxy-3-methylbutanoate (2,3-dihydroxyisovalerate) into 2-oxo-3-methylbutanoate (2-oxoisovalerate), the penultimate precursor to L-isoleucine and L-valine, respectively. The protein is Dihydroxy-acid dehydratase of Bacillus cereus (strain AH820).